A 330-amino-acid chain; its full sequence is Cyclic AMP receptor-like protein E (330 aa).

The Extracellular segment spans residues 1–10 (MLSLSSYVLN). Residues 11 to 31 (LVGSILCLIGCLFIIGHFFWI) form a helical membrane-spanning segment. The Cytoplasmic portion of the chain corresponds to 32 to 40 (PLLRTSLSR). Residues 41-61 (IIIYPTFILLLYDMVSFPSFI) form a helical membrane-spanning segment. At 62-85 (SKTADLYIERSTIICNFQEAIIQY) the chain is on the extracellular side. The chain crosses the membrane as a helical span at residues 86–106 (LILSNFIWSVCISVNLLYLCF). Residues 107-116 (SPNKNLKKNE) lie on the Cytoplasmic side of the membrane. A helical transmembrane segment spans residues 117–137 (LLYHLCSWGIPLIVVVITKIP). The Extracellular portion of the chain corresponds to 138-156 (NMISDNGNQCRFKSPNYIK). A helical transmembrane segment spans residues 157–177 (FYLETILFIAFMLFNFIVAFI). Topologically, residues 178–213 (TIKHIISGNLRESETTTTSVLFVNEKKITTKKIVWR) are cytoplasmic. The helical transmembrane segment at 214 to 234 (LLLYPSILSICYIMTLVLSIY) threads the bilayer. Residues 235-274 (QFSTESYGSGGAYANSINNKRNDKNTESGNSNNNNNSYIE) lie on the Extracellular side of the membrane. N-linked (GlcNAc...) asparagine glycosylation occurs at asparagine 269. A helical membrane pass occupies residues 275–295 (ILLYISKAIFLLQGFFNALVY). Topologically, residues 296–330 (LRSSKLRDRYKKITIFRKIFWRDEADYQSINDGFN) are cytoplasmic.

This sequence belongs to the G-protein coupled receptor 5 family.

It is found in the membrane. In terms of biological role, receptor for cAMP. This Dictyostelium discoideum (Social amoeba) protein is Cyclic AMP receptor-like protein E (crlE).